Reading from the N-terminus, the 594-residue chain is DELLA protein 1 (594 aa).

The disordered stretch occupies residues 1–36 (MKREHQESFGGGVISNNNKTNTNHLNSSKNINFGEC). Residues 15–30 (SNNNKTNTNHLNSSKN) show a composition bias toward low complexity. The DELLA motif signature appears at 61-65 (DELLA). Residues 207–587 (VDTQETGVRL…RSLIATSAWK (381 aa)) form the GRAS domain. A leucine repeat I (LRI) region spans residues 214–268 (VRLVHTLMACAEAIQQKNLKLAEALVKHISLLASLQTGAMRKVASYFAQALARRI). The tract at residues 216-253 (LVHTLMACAEAIQQKNLKLAEALVKHISLLASLQTGAM) is required for possible homodimerization. The LxCxE motif; degenerate motif lies at 221–225 (MACAE). The VHIID stretch occupies residues 285 to 350 (HMHFYESSPY…GGPPTFRLTG (66 aa)). A VHIID motif is present at residues 316–320 (VHVID). Positions 364 to 396 (QVGWKLAQLAQTIGVQFEFRGFVCNSIADLDPN) are leucine repeat II (LRII). Residues 406–508 (VAVNSVFELH…EIYLGKQICN (103 aa)) form a PFYRE region. Positions 414 to 418 (LHTML) match the LXXLL motif; degenerate motif. Positions 511–587 (AYEGVDRVER…RSLIATSAWK (77 aa)) are SAW.

It belongs to the GRAS family. DELLA subfamily. In terms of assembly, may be a homodimer. Post-translationally, ubiquitinated. Upon GA application it is ubiquitinated, leading to its subsequent degradation. In terms of tissue distribution, strongly expressed in the vascular tissue and endodermis but barely in the inner cortical cells where arbuscule are formed during arbuscular mycorrhizal (AM) symbiosis.

The protein resides in the nucleus. Probable transcriptional regulator that acts as a repressor of the gibberellin (GA) signaling pathway. Probably acts by participating in large multiprotein complexes that repress transcription of GA-inducible genes. Upon GA application, it is degraded by the proteasome, allowing the GA signaling pathway. Together with DELLA2, required to enable arbuscule development during arbuscular mycorrhizal (AM) symbiosis with AM fungi (e.g. Glomus versiforme) via the regulation of RAM1 which, in turn, regulates various AM genes (e.g. NSP1, NSP2, PT4, LEC5, RAM2, EXO70I, STR and RAD1). This Medicago truncatula (Barrel medic) protein is DELLA protein 1.